We begin with the raw amino-acid sequence, 239 residues long: Fatty acid metabolism regulator protein (239 aa).

An HTH gntR-type domain is found at 6 to 74 (KGPASFAEKY…HGKPTRVNNF (69 aa)). The segment at residues 34-53 (ERELSELIGVTRTTLREVLQ) is a DNA-binding region (H-T-H motif).

In terms of assembly, homodimer.

It is found in the cytoplasm. Multifunctional regulator of fatty acid metabolism. The sequence is that of Fatty acid metabolism regulator protein from Shewanella pealeana (strain ATCC 700345 / ANG-SQ1).